The chain runs to 89 residues: Large ribosomal subunit protein uL24 (89 aa).

This sequence belongs to the universal ribosomal protein uL24 family. Part of the 50S ribosomal subunit.

Its function is as follows. One of two assembly initiator proteins, it binds directly to the 5'-end of the 23S rRNA, where it nucleates assembly of the 50S subunit. One of the proteins that surrounds the polypeptide exit tunnel on the outside of the subunit. This Oenococcus oeni (strain ATCC BAA-331 / PSU-1) protein is Large ribosomal subunit protein uL24.